Reading from the N-terminus, the 201-residue chain is Inosine triphosphate pyrophosphatase (201 aa).

13–18 (TGNAKK) provides a ligand contact to ITP. E43 contacts Mg(2+). ITP contacts are provided by residues K55, 71-72 (DT), K88, 148-151 (FGWD), K171, and 176-177 (HR).

This sequence belongs to the HAM1 NTPase family. Homodimer. The cofactor is Mg(2+). Mn(2+) serves as cofactor.

Its subcellular location is the cytoplasm. It carries out the reaction ITP + H2O = IMP + diphosphate + H(+). It catalyses the reaction dITP + H2O = dIMP + diphosphate + H(+). The catalysed reaction is XTP + H2O = XMP + diphosphate + H(+). The enzyme catalyses N(6)-hydroxy-dATP + H2O = N(6)-hydroxy-dAMP + diphosphate + H(+). Functionally, pyrophosphatase that hydrolyzes the non-canonical purine nucleotides inosine triphosphate (ITP), deoxyinosine triphosphate (dITP) as well as 2'-deoxy-N-6-hydroxylaminopurine triphosphate (dHAPTP) and xanthosine 5'-triphosphate (XTP) to their respective monophosphate derivatives. The enzyme does not distinguish between the deoxy- and ribose forms. Probably excludes non-canonical purines from RNA and DNA precursor pools, thus preventing their incorporation into RNA and DNA and avoiding chromosomal lesions. The polypeptide is Inosine triphosphate pyrophosphatase (Gallus gallus (Chicken)).